The sequence spans 84 residues: Alpha-like toxin BmK M1 (84 aa).

The first 19 residues, 1-19 (MNYLVMISFALLLMTGVES), serve as a signal peptide directing secretion. Residues 21-83 (RDAYIAKPHN…VPIRVPGKCH (63 aa)) form the LCN-type CS-alpha/beta domain. 4 disulfides stabilise this stretch: Cys-31-Cys-82, Cys-35-Cys-55, Cys-41-Cys-65, and Cys-45-Cys-67. Arg-84 is a propeptide (removed by a carboxypeptidase).

It belongs to the long (4 C-C) scorpion toxin superfamily. Sodium channel inhibitor family. Alpha subfamily. In terms of tissue distribution, expressed by the venom gland.

It localises to the secreted. In terms of biological role, alpha toxins bind voltage-independently at site-3 of sodium channels (Nav) and inhibit the inactivation of the activated channels thereby blocking neuronal transmission. This toxin is active against both mammals and insects, and is classified as an alpha-like toxin. It is active on Nav1.2/SCN2A (EC(50)=139-252 nM), Nav1.3/SCN3A (EC(50)=565 nM), Nav1.4/SCN4A and Nav1.5/SCN5A (EC(50)=195-500 nM), Nav1.6/SCN8A (EC(50)=214 nM), and drosophila DmNav1 (EC(50)=30 nM). In mNav1.6/SCN8A, the toxin induces a large increase in both transient and persistent currents, which correlates with a prominent reduction in the fast component of inactivating current. In rNav1.2/SCN2A and rNav1.3/SCN3A, toxin-increased currents is much smaller. Moreover, the toxin only accelerates the slow inactivation development and delay recovery of mNav1.6/SCN8A through binding to the channel in the open state. Is 6-fold more toxic than BmK-M2. In vivo, intrahippocampal injection into rat induces epileptiform responses. In addition, intraplantar injection into rat induces spontaneous nociception and hyperalgesia. The protein is Alpha-like toxin BmK M1 of Olivierus martensii (Manchurian scorpion).